We begin with the raw amino-acid sequence, 561 residues long: Putative transport protein CKO_02260 (561 aa).

Helical transmembrane passes span 8 to 28 (LLNG…LCLG), 32 to 52 (LGSV…LLGQ), 66 to 86 (FMLF…SIFF), 94 to 114 (MLAL…GKLF), and 158 to 178 (NLSL…IVGA). RCK C-terminal domains lie at 200 to 288 (RGLD…SFRN) and 292 to 373 (VFDR…RIGF). The next 5 membrane-spanning stretches (helical) occupy residues 383-403 (LLAF…TFQF), 406-426 (FSFG…LGFL), 447-467 (FGLM…IGNG), 475-495 (MLIA…LFGA), and 540-560 (AIAN…WPGL).

Belongs to the AAE transporter (TC 2.A.81) family. YbjL subfamily.

Its subcellular location is the cell membrane. The polypeptide is Putative transport protein CKO_02260 (Citrobacter koseri (strain ATCC BAA-895 / CDC 4225-83 / SGSC4696)).